Here is a 353-residue protein sequence, read N- to C-terminus: MARQRVGLLFGGKSGEHDVSIVSAAAIAKAFAQEDNPDKYELLPFYIDRNGIWHDPEISQQVLTAGKALPVETVDPASRWQFPPAAPSIDAWFPIVHGPNGEDGTLQGLLTLMEKPFVGSKVLGSAAGMDKLAMKMVFAQAGLAQVDYVGVLRSEVWSGPCVFPKVCDKIEAQLDYPMFVKPANLGSSVGISKVRTRDELEKALDLAAEYDRRLIVEAGVTAREVECAVLGNDQPKASVVGEIRFDSDFYDYETKYTDGKSSMHIPAEIPGAIAQQIQELAIKAFQALDCRGIARVDFFYVEATQTVLINEINTLPGFTALSMYPQLWQQSGVPFPQLVDRLVQFALEDVPQA.

An ATP-grasp domain is found at 135 to 344 (KMVFAQAGLA…FPQLVDRLVQ (210 aa)). 171–226 (EAQLDYPMFVKPANLGSSVGISKVRTRDELEKALDLAAEYDRRLIVEAGVTAREVE) is an ATP binding site. Asp-297, Glu-311, and Asn-313 together coordinate Mg(2+).

Belongs to the D-alanine--D-alanine ligase family. Mg(2+) serves as cofactor. The cofactor is Mn(2+).

Its subcellular location is the cytoplasm. The enzyme catalyses 2 D-alanine + ATP = D-alanyl-D-alanine + ADP + phosphate + H(+). The protein operates within cell wall biogenesis; peptidoglycan biosynthesis. Functionally, cell wall formation. The sequence is that of D-alanine--D-alanine ligase from Picosynechococcus sp. (strain ATCC 27264 / PCC 7002 / PR-6) (Agmenellum quadruplicatum).